A 141-amino-acid chain; its full sequence is Large ribosomal subunit protein uL11 (141 aa).

Belongs to the universal ribosomal protein uL11 family. Part of the ribosomal stalk of the 50S ribosomal subunit. Interacts with L10 and the large rRNA to form the base of the stalk. L10 forms an elongated spine to which L12 dimers bind in a sequential fashion forming a multimeric L10(L12)X complex. In terms of processing, one or more lysine residues are methylated.

In terms of biological role, forms part of the ribosomal stalk which helps the ribosome interact with GTP-bound translation factors. This Prochlorococcus marinus subsp. pastoris (strain CCMP1986 / NIES-2087 / MED4) protein is Large ribosomal subunit protein uL11.